The chain runs to 285 residues: Guanylate kinase 2, chloroplastic/mitochondrial (285 aa).

The segment covering 1-19 (MLLTRRFSSALARSPLLPR) has biased composition (low complexity). The N-terminal 42 residues, 1–42 (MLLTRRFSSALARSPLLPRSLPPPRAVPATPPAPRPPPRRLM), are a transit peptide targeting the chloroplast and mitochondrion. Residues 1-66 (MLLTRRFSSA…PPPPSGADKD (66 aa)) are disordered. The span at 20-36 (SLPPPRAVPATPPAPRP) shows a compositional bias: pro residues. Residues 40–50 (RLMSSSSSGWH) show a composition bias toward low complexity. The 182-residue stretch at 91–272 (PMILVISGPS…AVKQVESIID (182 aa)) folds into the Guanylate kinase-like domain. Position 98–105 (98–105 (GPSGVGKD)) interacts with ATP. Catalysis depends on residues Arg-130, Arg-224, and Arg-235. ATP is bound at residue Asn-255.

It belongs to the guanylate kinase family. As to quaternary structure, monomer.

The protein localises to the plastid. It localises to the chloroplast. Its subcellular location is the mitochondrion. It catalyses the reaction GMP + ATP = GDP + ADP. Functionally, essential for recycling GMP and indirectly, cGMP. Essential for chloroplast differentiation at early stage of leaf development. May not be involved in the synthesis and maintenance of the organellar DNA during leaf development. The chain is Guanylate kinase 2, chloroplastic/mitochondrial (V2) from Oryza sativa subsp. japonica (Rice).